Reading from the N-terminus, the 328-residue chain is Phosphate acyltransferase (328 aa).

The protein belongs to the PlsX family. Homodimer. Probably interacts with PlsY.

Its subcellular location is the cytoplasm. It catalyses the reaction a fatty acyl-[ACP] + phosphate = an acyl phosphate + holo-[ACP]. Its pathway is lipid metabolism; phospholipid metabolism. Catalyzes the reversible formation of acyl-phosphate (acyl-PO(4)) from acyl-[acyl-carrier-protein] (acyl-ACP). This enzyme utilizes acyl-ACP as fatty acyl donor, but not acyl-CoA. The protein is Phosphate acyltransferase of Staphylococcus aureus (strain USA300).